A 669-amino-acid polypeptide reads, in one-letter code: MSKVFKLHSDFQPGGDQPEAIRQLQEGLEDGLAHQTLLGVTGSGKTFTVANVIANLNRPTMVLAPNKTLAAQLYSEMKDFFPENSVEYFVSYYDYYQPEAYVPSSDTFIEKDASVNEHIEQMRLSATKALLERRDVIVVASVSAIYGLGDPDSYLKMMLHLTNGMMIDQRSILRRLAELQYTRNDQAFQRGTFRVRGEVIDIFPAESDEHALRVELFDDEVERLSLFDPLTGQVQYHVPRYTVYPKTHYVTPRERIIQAMEAIKIELEQRRKVLLANGKLLEEQRITQRTQFDLEMMNELGYCSGIENYSRYLSGRTEGEPPPTLFDYLPADGLLVVDESHVTIPQIGGMYRGDRSRKETLVEYGFRMPSALDNRPLRFEEFEALAPQTIYISATPGKYELEKSSGDVVEQVVRPTGLLDPEVEVRPVATQVDDLLSEIRIRAVKNERVLVTTLTKRMAEDLTEYLEEHGERVRYLHSDIDTVERVEIIRDLRLGEFDVLVGINLLREGLDMPEVSLVAILDADKEGFLRSERSLIQTIGRAARNLHGKAILYGDKITDSMAKAIGETERRRAKQQIFNEKHGIVPKGLNKKINDILQIGQPAGGKRKGRGKAVATAETFSNLSAKELESKIRELEAKMYQHAQDLEFEQAASVRDQVQALREQFIANF.

Residues 26–414 (EGLEDGLAHQ…SGDVVEQVVR (389 aa)) enclose the Helicase ATP-binding domain. 39 to 46 (GVTGSGKT) serves as a coordination point for ATP. Residues 92–115 (YYDYYQPEAYVPSSDTFIEKDASV) carry the Beta-hairpin motif. The Helicase C-terminal domain maps to 431-597 (QVDDLLSEIR…GLNKKINDIL (167 aa)). Positions 629 to 664 (ESKIRELEAKMYQHAQDLEFEQAASVRDQVQALREQ) constitute a UVR domain.

It belongs to the UvrB family. In terms of assembly, forms a heterotetramer with UvrA during the search for lesions. Interacts with UvrC in an incision complex.

It is found in the cytoplasm. Functionally, the UvrABC repair system catalyzes the recognition and processing of DNA lesions. A damage recognition complex composed of 2 UvrA and 2 UvrB subunits scans DNA for abnormalities. Upon binding of the UvrA(2)B(2) complex to a putative damaged site, the DNA wraps around one UvrB monomer. DNA wrap is dependent on ATP binding by UvrB and probably causes local melting of the DNA helix, facilitating insertion of UvrB beta-hairpin between the DNA strands. Then UvrB probes one DNA strand for the presence of a lesion. If a lesion is found the UvrA subunits dissociate and the UvrB-DNA preincision complex is formed. This complex is subsequently bound by UvrC and the second UvrB is released. If no lesion is found, the DNA wraps around the other UvrB subunit that will check the other stand for damage. The protein is UvrABC system protein B of Photorhabdus laumondii subsp. laumondii (strain DSM 15139 / CIP 105565 / TT01) (Photorhabdus luminescens subsp. laumondii).